Here is a 122-residue protein sequence, read N- to C-terminus: Small ribosomal subunit protein uS13 (122 aa).

Positions 93 to 122 (RKGLPVRGQTTKNNARTRKGKRKTVGSASK) are disordered. The segment covering 107 to 116 (ARTRKGKRKT) has biased composition (basic residues).

The protein belongs to the universal ribosomal protein uS13 family. Part of the 30S ribosomal subunit. Forms a loose heterodimer with protein S19. Forms two bridges to the 50S subunit in the 70S ribosome.

Functionally, located at the top of the head of the 30S subunit, it contacts several helices of the 16S rRNA. In the 70S ribosome it contacts the 23S rRNA (bridge B1a) and protein L5 of the 50S subunit (bridge B1b), connecting the 2 subunits; these bridges are implicated in subunit movement. Contacts the tRNAs in the A and P-sites. This is Small ribosomal subunit protein uS13 from Wolinella succinogenes (strain ATCC 29543 / DSM 1740 / CCUG 13145 / JCM 31913 / LMG 7466 / NCTC 11488 / FDC 602W) (Vibrio succinogenes).